A 1117-amino-acid chain; its full sequence is WD repeat and HMG-box DNA-binding protein 1 (1117 aa).

WD repeat units lie at residues 11–50 (GHTE…DPKS), 52–91 (NVGE…GILT), 93–131 (FTTN…QQQT), 134–173 (GHDA…CAVS), 184–223 (VNAK…NPFD), 228–267 (SISQ…CMER), and 271–310 (EKGY…SGKV). Ser-333 and Ser-377 each carry phosphoserine. A Glycyl lysine isopeptide (Lys-Gly) (interchain with G-Cter in SUMO2) cross-link involves residue Lys-390. Position 664 is an N6-acetyllysine (Lys-664). The disordered stretch occupies residues 816 to 885 (LAETQSEEEK…NLFQSANSSD (70 aa)). Residue Thr-819 is modified to Phosphothreonine. Residue Ser-821 is modified to Phosphoserine. The segment covering 861 to 872 (DTVSEEKPESHN) has biased composition (basic and acidic residues). Residues 873–885 (HGQNLFQSANSSD) show a composition bias toward polar residues. Phosphoserine is present on residues Ser-910 and Ser-923. Positions 911–1005 (SKEPAVSANS…AVCLQNSENQ (95 aa)) are disordered. Over residues 917–943 (SANSTRSANILDSMNKSSRKSTSLNRM) the composition is skewed to polar residues. Lys-953 carries the N6-acetyllysine modification. The span at 962 to 974 (KQASAASYFQKRT) shows a compositional bias: polar residues. A compositionally biased stretch (basic and acidic residues) spans 975–987 (PQADKTEEVKENP). The segment covering 988-1004 (KSSSSDAPAVCLQNSEN) has biased composition (polar residues). Positions 1004–1073 (NQRPKTGFQM…SDGAEAKKRK (70 aa)) form a DNA-binding region, HMG box. Ser-1030 is subject to Phosphoserine. The segment at 1054–1074 (WTNKAKGETASDGAEAKKRKR) is disordered. Lys-1116 participates in a covalent cross-link: Glycyl lysine isopeptide (Lys-Gly) (interchain with G-Cter in SUMO1); alternate. Lys-1116 participates in a covalent cross-link: Glycyl lysine isopeptide (Lys-Gly) (interchain with G-Cter in SUMO2); alternate.

Trimer. Interacts with the polymerase alpha catalytic subunit POLA1. Interacts with MCM10. Interacts with DNA2. Interacts with CDC45 and GINS2 subunit of GINS complex; these interactions associate WDHD1 with the CMG helicase complex.

The protein localises to the nucleus. It localises to the nucleoplasm. Functionally, core replisome component that acts as a replication initiation factor. Binds directly to the CMG complex and functions as a hub to recruit additional proteins to the replication fork. The protein is WD repeat and HMG-box DNA-binding protein 1 (Wdhd1) of Mus musculus (Mouse).